The sequence spans 1091 residues: Rho GTPase-activating protein 7 (1091 aa).

Residues Leu11–Glu78 form the SAM domain. Phosphoserine is present on residues Ser86, Ser89, and Ser129. 4 disordered regions span residues Ser120–Arg181, Arg296–Leu329, Arg402–Met439, and Ser491–Gly552. The span at Pro130 to Ser143 shows a compositional bias: polar residues. Composition is skewed to low complexity over residues Ser155–Ser166 and Val298–Thr324. The tract at residues Gln274–Gly447 is focal adhesion-targeting (FAT). At Ser321 the chain carries Phosphoserine. A compositionally biased stretch (basic and acidic residues) spans Leu414–Glu425. Positions Ala499–Lys511 are enriched in polar residues. A compositionally biased stretch (basic and acidic residues) spans Ile513 to Ser525. Residues Asp526–Asn535 are compositionally biased toward polar residues. The tract at residues Lys614–Arg636 is polybasic cluster (PBR). Positions Val641–Phe847 constitute a Rho-GAP domain. Residues Ser877–Glu1084 enclose the START domain.

In terms of assembly, interacts with EF1A1, facilitates EF1A1 distribution to the membrane periphery and ruffles upon growth factor stimulation and suppresses cell migration. Interacts with tensin TNS1 (via N-terminus); the interaction is decreased by phosphorylation of TNS1. Interacts with TNS3 and PTEN; in resting cells, interacts with TNS3 (via C2 tensin-type domain) but, following growth factor stimulation, TNS3 and PTEN are phosphorylated which leads to weakened interaction with TNS3 and enhanced interaction with PTEN. Interacts (via C-terminus) with tensin TNS4 (via SH2 domain); the interaction is independent of tyrosine phosphorylation of DLC1.

It is found in the cytoplasm. It localises to the cell junction. The protein resides in the focal adhesion. The protein localises to the membrane. Its function is as follows. Functions as a GTPase-activating protein for the small GTPases RHOA, RHOB, RHOC and CDC42, terminating their downstream signaling. This induces morphological changes and detachment through cytoskeletal reorganization, playing a critical role in biological processes such as cell migration and proliferation. Also functions in vivo as an activator of the phospholipase PLCD1. Active DLC1 increases cell migration velocity but reduces directionality. Required for growth factor-induced epithelial cell migration; in resting cells, interacts with TNS3 while PTEN interacts with the p85 regulatory subunit of the PI3K kinase complex but growth factor stimulation induces phosphorylation of TNS3 and PTEN, causing them to change their binding preference so that PTEN interacts with DLC1 and TNS3 interacts with p85. The PTEN-DLC1 complex translocates to the posterior of migrating cells to activate RHOA while the TNS3-p85 complex translocates to the leading edge of migrating cells to promote RAC1 activation. This is Rho GTPase-activating protein 7 (Dlc1) from Rattus norvegicus (Rat).